A 1037-amino-acid polypeptide reads, in one-letter code: Multidrug resistance protein MdtF (1037 aa).

Residues 1 to 9 are Cytoplasmic-facing; the sequence is MANYFIDRP. A helical transmembrane segment spans residues 10 to 28; it reads VFAWVLAIIMMLAGGLAIM. Residues 29-339 are Periplasmic-facing; that stretch reads NLPVAQYPQI…TPFIEISIQE (311 aa). The helical transmembrane segment at 340–359 threads the bilayer; sequence VFKTLVEAIILVFLVMYLFL. Residues 360–365 are Cytoplasmic-facing; it reads QNFRAT. Residues 366–385 traverse the membrane as a helical segment; the sequence is IIPTIAVPVVILGTFAILSA. The Periplasmic segment spans residues 386 to 391; it reads VGFTIN. A helical transmembrane segment spans residues 392–413; it reads TLTMFGMVLAIGLLVDDAIVVV. The Cytoplasmic portion of the chain corresponds to 414–441; it reads ENVERVIAEDKLPPKEATHKSMGQIQRA. Residues 442 to 460 form a helical membrane-spanning segment; that stretch reads LVGIAVVLSAVFMPMAFMS. Topologically, residues 461–473 are periplasmic; that stretch reads GATGEIYRQFSIT. A helical transmembrane segment spans residues 474–496; the sequence is LISSMLLSVFVAMSLTPALCATI. Residues 497–536 lie on the Cytoplasmic side of the membrane; the sequence is LKAAPEGGHKPNALFARFNTLFEKSTQHYTDSTRSLLRCT. A helical membrane pass occupies residues 537–555; that stretch reads GRYMVVYLLICAGMAVLFL. Residues 556–870 lie on the Periplasmic side of the membrane; it reads RTPTSFLPEE…SYQEALSSNQ (315 aa). Residues 871 to 890 form a helical membrane-spanning segment; the sequence is APALYAISLVVVFLALAALY. Topologically, residues 891-896 are cytoplasmic; sequence ESWSIP. A helical transmembrane segment spans residues 897 to 916; sequence FSVMLVVPLGVVGALLATDL. At 917 to 922 the chain is on the periplasmic side; that stretch reads RGLSND. Residues 923 to 944 form a helical membrane-spanning segment; that stretch reads VYFQVGLLTTIGLSAKNAILIV. Topologically, residues 945 to 972 are cytoplasmic; sequence EFAVEMMQKEGKTPIEAIIEAARMRLRP. Residues 973 to 991 form a helical membrane-spanning segment; sequence ILMTSLAFILGVLPLVISH. Residues 992-1004 are Periplasmic-facing; it reads GAGSGAQNAVGTG. A helical transmembrane segment spans residues 1005–1027; the sequence is VMGGMFAATVLAIYFVPVFFVVV. Over 1028-1037 the chain is Cytoplasmic; the sequence is EHLFARFKKA.

Belongs to the resistance-nodulation-cell division (RND) (TC 2.A.6) family. In terms of assembly, homotrimer. Part of the tripartite efflux system MdtEF-TolC, which is composed of an inner membrane transporter, MdtF, a membrane fusion protein, MdtE, and an outer membrane component, TolC. The complex forms a large protein conduit and can translocate molecules across both the inner and outer membranes.

Its subcellular location is the cell inner membrane. Its function is as follows. Part of the tripartite efflux system MdtEF-TolC, which confers resistance to compounds such as rhodamine 6G, erythromycin, doxorubicin, ethidium bromide, TPP, SDS, deoxycholate, crystal violet and benzalkonium. The polypeptide is Multidrug resistance protein MdtF (mdtF) (Escherichia coli (strain K12)).